We begin with the raw amino-acid sequence, 153 residues long: 6,7-dimethyl-8-ribityllumazine synthase (153 aa).

Residues phenylalanine 22, 56-58 (AFE), and 80-82 (AVI) contribute to the 5-amino-6-(D-ribitylamino)uracil site. 85–86 (GT) provides a ligand contact to (2S)-2-hydroxy-3-oxobutyl phosphate. The Proton donor role is filled by histidine 88. Phenylalanine 113 provides a ligand contact to 5-amino-6-(D-ribitylamino)uracil. Residue arginine 127 coordinates (2S)-2-hydroxy-3-oxobutyl phosphate.

This sequence belongs to the DMRL synthase family. In terms of assembly, forms an icosahedral capsid composed of 60 subunits, arranged as a dodecamer of pentamers.

The enzyme catalyses (2S)-2-hydroxy-3-oxobutyl phosphate + 5-amino-6-(D-ribitylamino)uracil = 6,7-dimethyl-8-(1-D-ribityl)lumazine + phosphate + 2 H2O + H(+). Its pathway is cofactor biosynthesis; riboflavin biosynthesis; riboflavin from 2-hydroxy-3-oxobutyl phosphate and 5-amino-6-(D-ribitylamino)uracil: step 1/2. Its function is as follows. Catalyzes the formation of 6,7-dimethyl-8-ribityllumazine by condensation of 5-amino-6-(D-ribitylamino)uracil with 3,4-dihydroxy-2-butanone 4-phosphate. This is the penultimate step in the biosynthesis of riboflavin. This Hydrogenovibrio crunogenus (strain DSM 25203 / XCL-2) (Thiomicrospira crunogena) protein is 6,7-dimethyl-8-ribityllumazine synthase.